Reading from the N-terminus, the 661-residue chain is Acetyl-coenzyme A synthetase (661 aa).

Residues 197-200 and threonine 320 each bind CoA; that span reads RGGK. ATP is bound by residues 396–398, 420–425, aspartate 511, and arginine 526; these read GEP and DTWWQT. Serine 534 lines the CoA pocket. Arginine 537 contributes to the ATP binding site. Mg(2+)-binding residues include valine 548 and valine 553. The residue at position 620 (lysine 620) is an N6-acetyllysine.

It belongs to the ATP-dependent AMP-binding enzyme family. The cofactor is Mg(2+). In terms of processing, acetylated. Deacetylation by the SIR2-homolog deacetylase activates the enzyme.

It carries out the reaction acetate + ATP + CoA = acetyl-CoA + AMP + diphosphate. Catalyzes the conversion of acetate into acetyl-CoA (AcCoA), an essential intermediate at the junction of anabolic and catabolic pathways. AcsA undergoes a two-step reaction. In the first half reaction, AcsA combines acetate with ATP to form acetyl-adenylate (AcAMP) intermediate. In the second half reaction, it can then transfer the acetyl group from AcAMP to the sulfhydryl group of CoA, forming the product AcCoA. In Leptospira interrogans serogroup Icterohaemorrhagiae serovar Lai (strain 56601), this protein is Acetyl-coenzyme A synthetase.